The sequence spans 355 residues: MKIRIDIPHHPYDIQIEKGCMAQAGQWLRELWQPQKVVIVTDNHVASLYAEKVKLSLEDAGFQVAVFDFLEGEERKNLTTVQKVYEFLVKQGLTRSDGIVALGGGVVGDLAGFVASTYMRGIHFVQIPTSLTAQVDSSIGGKTGVNTPFAKNMVGTFAQPDGVLIDPLVLETLGKRELIEGMGEVIKYGLIEDPELWALLTGLNGSVESILEHAETLIXHSCQVKRKMVVEDELDNGIRLYLNFGHTIGHAIEATAGYGKVMHGEAVAMGMVQISKIAEEKGLMPAGITQSITEMCQKFGLPVDYENWEVDKLYQALTHDKKARGNTLKLVLVPELGSATIHPVSLEEMKDYLVK.

NAD(+) contacts are provided by residues 71–76 (EGEERK), 105–109 (GVVGD), 129–130 (TS), Lys-142, and Lys-151. Zn(2+) contacts are provided by Glu-184, His-246, and His-263.

This sequence belongs to the sugar phosphate cyclases superfamily. Dehydroquinate synthase family. Requires Co(2+) as cofactor. Zn(2+) serves as cofactor. NAD(+) is required as a cofactor.

It localises to the cytoplasm. The enzyme catalyses 7-phospho-2-dehydro-3-deoxy-D-arabino-heptonate = 3-dehydroquinate + phosphate. The protein operates within metabolic intermediate biosynthesis; chorismate biosynthesis; chorismate from D-erythrose 4-phosphate and phosphoenolpyruvate: step 2/7. In terms of biological role, catalyzes the conversion of 3-deoxy-D-arabino-heptulosonate 7-phosphate (DAHP) to dehydroquinate (DHQ). The protein is 3-dehydroquinate synthase of Streptococcus pneumoniae serotype 19F (strain G54).